The primary structure comprises 312 residues: Metaxin-1 homolog (312 aa).

The chain crosses the membrane as a helical span at residues 282 to 302 (ILFTIGALVLSVAFAIHTGLI).

This sequence belongs to the metaxin family. In terms of assembly, associates with the mitochondrial contact site and cristae organizing system (MICOS) complex (also known as MINOS or MitOS complex).

The protein localises to the mitochondrion outer membrane. Functionally, involved in transport of proteins into the mitochondrion. Essential for embryonic development. This is Metaxin-1 homolog from Caenorhabditis briggsae.